We begin with the raw amino-acid sequence, 128 residues long: Ribonuclease pancreatic (128 aa).

Residues 1 to 20 (KETAAMKFQRQHMDSGSSLS) form a disordered region. Substrate-binding residues include Lys7 and Arg10. The Proton acceptor role is filled by His12. Disulfide bonds link Cys26–Cys84, Cys40–Cys95, Cys58–Cys110, and Cys65–Cys72. An N-linked (GlcNAc...) asparagine glycan is attached at Asn34. Substrate contacts are provided by residues 41–45 (KPVNT), Lys66, and Arg85. Residue His119 is the Proton donor of the active site.

Belongs to the pancreatic ribonuclease family. In terms of assembly, monomer. Interacts with and forms tight 1:1 complexes with RNH1. Dimerization of two such complexes may occur. Interaction with RNH1 inhibits this protein. In terms of tissue distribution, pancreas.

The protein localises to the secreted. The catalysed reaction is an [RNA] containing cytidine + H2O = an [RNA]-3'-cytidine-3'-phosphate + a 5'-hydroxy-ribonucleotide-3'-[RNA].. It carries out the reaction an [RNA] containing uridine + H2O = an [RNA]-3'-uridine-3'-phosphate + a 5'-hydroxy-ribonucleotide-3'-[RNA].. Endonuclease that catalyzes the cleavage of RNA on the 3' side of pyrimidine nucleotides. Acts on single-stranded and double-stranded RNA. In Choloepus hoffmanni (Hoffmann's two-fingered sloth), this protein is Ribonuclease pancreatic (RNASE1).